A 369-amino-acid chain; its full sequence is Phosphate acyltransferase (369 aa).

Belongs to the PlsX family. Homodimer. Probably interacts with PlsY.

Its subcellular location is the cytoplasm. It carries out the reaction a fatty acyl-[ACP] + phosphate = an acyl phosphate + holo-[ACP]. Its pathway is lipid metabolism; phospholipid metabolism. Catalyzes the reversible formation of acyl-phosphate (acyl-PO(4)) from acyl-[acyl-carrier-protein] (acyl-ACP). This enzyme utilizes acyl-ACP as fatty acyl donor, but not acyl-CoA. This Gluconobacter oxydans (strain 621H) (Gluconobacter suboxydans) protein is Phosphate acyltransferase.